A 630-amino-acid chain; its full sequence is Beta-phellandrene synthase, chloroplastic (630 aa).

A chloroplast-targeting transit peptide spans 1 to 48; sequence MALVSSAPKSCLHKSLIRSTHHELKPLRRTIPTLGMCRRGKSFTPSVS. Mg(2+) contacts are provided by aspartate 381, aspartate 385, and aspartate 533. A DDXXD motif motif is present at residues 381-385; it reads DDIYD.

Belongs to the terpene synthase family. Tpsd subfamily. Requires Mg(2+) as cofactor. Mn(2+) serves as cofactor. K(+) is required as a cofactor.

It is found in the plastid. It localises to the chloroplast. It catalyses the reaction (2E)-geranyl diphosphate = (-)-beta-phellandrene + diphosphate. The protein operates within terpene metabolism; oleoresin biosynthesis. In terms of biological role, converts geranyl diphosphate to four products with (-)-(4S)-beta-phellandrene (52%) as the major olefin, and lesser amounts of (-)-(1S,5S)-beta-pinene (34%), (-)-1S,5S-alpha-pinene (8.5%), and (-)-(4S)-limonene (6%). Involved in defensive oleoresin formation in conifers in response to insect attack or other injury. Involved in monoterpene (C10) olefins biosynthesis. The chain is Beta-phellandrene synthase, chloroplastic (ag8) from Abies grandis (Grand fir).